We begin with the raw amino-acid sequence, 70 residues long: Large ribosomal subunit protein eL38 (70 aa).

It belongs to the eukaryotic ribosomal protein eL38 family.

The polypeptide is Large ribosomal subunit protein eL38 (RpL38) (Lonomia obliqua (Moth)).